A 196-amino-acid chain; its full sequence is Mpv17-like protein (196 aa).

Topologically, residues 1 to 16 (MAGWWPALSRAARRHP) are cytoplasmic. The segment at 16–55 (PWPTNVLLYGSLVSAGDALQQRLQGREANWRQTRRVATLV) is targeting to peroxisomes. The chain crosses the membrane as a helical span at residues 17-34 (WPTNVLLYGSLVSAGDAL). Residues 35–50 (QQRLQGREANWRQTRR) lie on the Lumenal side of the membrane. A helical transmembrane segment spans residues 51-67 (VATLVVTFHANFNYVWL). Residues 68–90 (RLLERALPGRAPHALLAKLLCDQ) are Cytoplasmic-facing. Residues 91–108 (VVGAPIAVSAFYVGMSIL) form a helical membrane-spanning segment. Over 109–150 (QGKDDIFLDLKQKFWNTYLSGLMYWPFVQLTNFSLVPVQWRT) the chain is Lumenal. A helical transmembrane segment spans residues 151–167 (AYAGVCGFLWATFICFS). Residues 168–196 (QQSGDGTFKSAFTILYTKGTSATEGYPKK) lie on the Cytoplasmic side of the membrane.

It belongs to the peroxisomal membrane protein PXMP2/4 family. In terms of tissue distribution, isoform 1 is detected in the kidney (at protein level). Isoform 1 and isoform 2 are expressed in the kidney, heart, liver, lung, pancreas and skeletal muscle.

The protein localises to the peroxisome membrane. Its function is as follows. Participates in reactive oxygen species metabolism by up- or down-regulation of the genes of antioxidant enzymes. Protective against the mitochondrial apoptotic cascade. The chain is Mpv17-like protein (MPV17L) from Homo sapiens (Human).